We begin with the raw amino-acid sequence, 429 residues long: Histidinol dehydrogenase (429 aa).

Residues Tyr-131, Gln-193, and Asn-216 each contribute to the NAD(+) site. Substrate is bound by residues Ser-239, Gln-261, and His-264. Gln-261 and His-264 together coordinate Zn(2+). Catalysis depends on proton acceptor residues Glu-327 and His-328. Residues His-328, Asp-361, Glu-415, and His-420 each coordinate substrate. Asp-361 lines the Zn(2+) pocket. His-420 serves as a coordination point for Zn(2+).

Belongs to the histidinol dehydrogenase family. The cofactor is Zn(2+).

The catalysed reaction is L-histidinol + 2 NAD(+) + H2O = L-histidine + 2 NADH + 3 H(+). It functions in the pathway amino-acid biosynthesis; L-histidine biosynthesis; L-histidine from 5-phospho-alpha-D-ribose 1-diphosphate: step 9/9. Its function is as follows. Catalyzes the sequential NAD-dependent oxidations of L-histidinol to L-histidinaldehyde and then to L-histidine. This is Histidinol dehydrogenase (hisD) from Methanocaldococcus jannaschii (strain ATCC 43067 / DSM 2661 / JAL-1 / JCM 10045 / NBRC 100440) (Methanococcus jannaschii).